Consider the following 110-residue polypeptide: Phosphoribosyl-ATP pyrophosphatase (110 aa).

It belongs to the PRA-PH family.

It localises to the cytoplasm. It catalyses the reaction 1-(5-phospho-beta-D-ribosyl)-ATP + H2O = 1-(5-phospho-beta-D-ribosyl)-5'-AMP + diphosphate + H(+). It participates in amino-acid biosynthesis; L-histidine biosynthesis; L-histidine from 5-phospho-alpha-D-ribose 1-diphosphate: step 2/9. The chain is Phosphoribosyl-ATP pyrophosphatase (hisE) from Azotobacter chroococcum mcd 1.